A 331-amino-acid polypeptide reads, in one-letter code: Septin homolog spn2 (331 aa).

A Septin-type G domain is found at 29–301; that stretch reads RGFQFNVMVV…EKFRFKQLSS (273 aa). Residues 39-46 are G1 motif; it reads GPSGSGKS. GTP is bound by residues 39–46, Thr-73, Gly-99, 179–187, Gly-235, and Arg-250; these read GPSGSGKS and KSDSLTLEE. Residues 96 to 99 are G3 motif; that stretch reads DTPG. The segment at 178–181 is G4 motif; it reads AKSD. Residues 311 to 331 form a disordered region; sequence RMGSPAPVYPSEPHLHTATAQ.

Belongs to the TRAFAC class TrmE-Era-EngA-EngB-Septin-like GTPase superfamily. Septin GTPase family. Component of the septin complex composed of two copies of each spn1, spn2, spn3 and spn4. Component of the sporulation-specific septin complex composed of at least spn2, spn5, spn6 and spn7.

The protein resides in the cytoplasm. The protein localises to the cell cortex. It localises to the forespore membrane. Plays a role in the cell cycle. Involved in a late stage of septum formation leading to the separation of the daughter cells. Involved in the correct orientation of forespore membrane extension during sporulation. Binds phosphatidylinositol 4-phosphate. The protein is Septin homolog spn2 (spn2) of Schizosaccharomyces pombe (strain 972 / ATCC 24843) (Fission yeast).